A 398-amino-acid chain; its full sequence is 1-aminocyclopropane-1-carboxylate oxidase homolog 5 (398 aa).

In terms of domain architecture, Fe2OG dioxygenase spans 247–347 (KSHIMFGQYY…RISMPCFVST (101 aa)). Residues histidine 271, aspartate 273, and histidine 327 each coordinate Fe cation. Arginine 338 serves as a coordination point for 2-oxoglutarate.

This sequence belongs to the iron/ascorbate-dependent oxidoreductase family. Fe(2+) is required as a cofactor. Expressed in etiolated seedlings, leaves, stems and flowers.

This Arabidopsis thaliana (Mouse-ear cress) protein is 1-aminocyclopropane-1-carboxylate oxidase homolog 5 (2A6).